Reading from the N-terminus, the 73-residue chain is uncharacterized protein (73 aa).

The disordered stretch occupies residues 1–32 (MFLSSAVRKDSNGVRHLPSVQRWTPGSPPTRA).

This is an uncharacterized protein from Frog virus 3 (isolate Goorha) (FV-3).